We begin with the raw amino-acid sequence, 179 residues long: MASILSPVPVLAAGGIADINPGLTLWTAITFLVMLAVLAKFAWGPIVKMLAERERSIREAIDSAKKERAEAERLLAAQKESLSKAQREAAELARRNQQEVEALRQELTAKARKEADELVAEARRQIAEELVKAKAELKAQVVDLAIDAASRLVKANLDEKSQRALVEEYIAQLPANRAA.

Residues 27 to 47 form a helical membrane-spanning segment; it reads TAITFLVMLAVLAKFAWGPIV.

It belongs to the ATPase B chain family. As to quaternary structure, F-type ATPases have 2 components, F(1) - the catalytic core - and F(0) - the membrane proton channel. F(1) has five subunits: alpha(3), beta(3), gamma(1), delta(1), epsilon(1). F(0) has three main subunits: a(1), b(2) and c(10-14). The alpha and beta chains form an alternating ring which encloses part of the gamma chain. F(1) is attached to F(0) by a central stalk formed by the gamma and epsilon chains, while a peripheral stalk is formed by the delta and b chains.

It localises to the cell inner membrane. Its function is as follows. F(1)F(0) ATP synthase produces ATP from ADP in the presence of a proton or sodium gradient. F-type ATPases consist of two structural domains, F(1) containing the extramembraneous catalytic core and F(0) containing the membrane proton channel, linked together by a central stalk and a peripheral stalk. During catalysis, ATP synthesis in the catalytic domain of F(1) is coupled via a rotary mechanism of the central stalk subunits to proton translocation. Component of the F(0) channel, it forms part of the peripheral stalk, linking F(1) to F(0). The chain is ATP synthase subunit b from Anaeromyxobacter dehalogenans (strain 2CP-C).